We begin with the raw amino-acid sequence, 267 residues long: Glutamate racemase (267 aa).

Substrate-binding positions include 10-11 (DS) and 42-43 (YG). Cysteine 73 (proton donor/acceptor) is an active-site residue. 74-75 (NT) contributes to the substrate binding site. The active-site Proton donor/acceptor is the cysteine 183. 184-185 (TH) provides a ligand contact to substrate.

Belongs to the aspartate/glutamate racemases family.

The enzyme catalyses L-glutamate = D-glutamate. It participates in cell wall biogenesis; peptidoglycan biosynthesis. Its function is as follows. Provides the (R)-glutamate required for cell wall biosynthesis. The protein is Glutamate racemase of Limosilactobacillus reuteri (strain DSM 20016) (Lactobacillus reuteri).